Consider the following 620-residue polypeptide: Cilia- and flagella-associated protein 52 (620 aa).

WD repeat units lie at residues 62–106 (GHGN…LLAR), 109–150 (LHKG…AICG), 156–195 (LNVG…RKIW), 288–327 (QLQG…ETLI), 330–369 (CHFD…ELLR), 372–411 (VPNM…LMYV), 415–454 (AHRI…QKLE), 459–498 (EHKS…RNQM), 500–539 (LANT…VIRE), 543–582 (SLSG…VTHV), and 585–620 (GHSG…PYTS).

The protein belongs to the CFAP52 family. As to quaternary structure, microtubule inner protein component of sperm flagellar doublet microtubules. Interacts with BRCA2. Interacts with the CCT chaperonin complex. Interacts with HSP70. Interacts with AK8. Interacts with CFAP45. Interacts with DNAI1. Interacts with IQDC. As to expression, expressed in respiratory cells and sperm (at protein level). Highly expressed in testis. Up-regulated in hepatocellular carcinoma (HCC).

It is found in the cytoplasm. The protein localises to the cytoskeleton. The protein resides in the cilium axoneme. Its subcellular location is the flagellum axoneme. Microtubule inner protein (MIP) part of the dynein-decorated doublet microtubules (DMTs) in cilia axoneme. Important for proper ciliary and flagellar beating. May act in cooperation with CFAP45 and axonemal dynein subunit DNAH11. May play a role in cell growth and/or survival. The polypeptide is Cilia- and flagella-associated protein 52 (Homo sapiens (Human)).